Here is a 264-residue protein sequence, read N- to C-terminus: Ribosomal protein L11 methyltransferase (264 aa).

S-adenosyl-L-methionine is bound by residues Thr116, Gly137, Asp159, and Asn200.

It belongs to the methyltransferase superfamily. PrmA family.

Its subcellular location is the cytoplasm. It catalyses the reaction L-lysyl-[protein] + 3 S-adenosyl-L-methionine = N(6),N(6),N(6)-trimethyl-L-lysyl-[protein] + 3 S-adenosyl-L-homocysteine + 3 H(+). Its function is as follows. Methylates ribosomal protein L11. In Thermotoga neapolitana (strain ATCC 49049 / DSM 4359 / NBRC 107923 / NS-E), this protein is Ribosomal protein L11 methyltransferase.